Here is a 372-residue protein sequence, read N- to C-terminus: Monocyte differentiation antigen CD14 (372 aa).

The N-terminal stretch at 1–17 (MEPVPCLLLLLLPLLRA) is a signal peptide. 2 disulfides stabilise this stretch: C25–C36 and C34–C51. N37 carries N-linked (GlcNAc...) asparagine glycosylation. 11 LRR repeats span residues 54-82 (AVQV…QRRY), 83-118 (ADVV…YSRL), 119-145 (KELA…GPAL), 146-173 (STLS…KPGL), 174-197 (QVLN…FSAL), 198-225 (TTLD…FPAL), 226-252 (QDLA…GVQP), 253-275 (HHLD…PSAL), 276-296 (NSLN…PAKL), 297-318 (NVLD…LPKV), and 319-346 (VNLS…SGVF). N152 is a glycosylation site (N-linked (GlcNAc...) asparagine). Cystine bridges form between C188-C218 and C242-C269. N-linked (GlcNAc...) asparagine glycosylation occurs at N279. Residues 287–372 (QVPKGLPAKL…ALLQGARGFI (86 aa)) form a required for response to bacterial lipopolysaccharide (LPS) region. N-linked (GlcNAc...) asparagine glycosylation occurs at N320. Residue N342 is the site of GPI-anchor amidated asparagine attachment. Positions 343 to 372 (SGVFPACPPSPLAMGMSGTLALLQGARGFI) are cleaved as a propeptide — removed in mature form.

Belongs to the lipopolysaccharide (LPS) receptor, a multi-protein complex containing at least CD14, LY96 and TLR4. Interacts with LPS-bound LPB. Interacts with LPAR1. Interacts with the TLR2:TLR6 or TLR2:TLR1 heterodimers; upon interaction with ligands such as diacylated lipopeptides and triacylated lipopeptides, respectively. Interacts with MYO18A. Interacts with FSTL1.

It localises to the cell membrane. It is found in the secreted. The protein localises to the membrane raft. The protein resides in the golgi apparatus. Coreceptor for bacterial lipopolysaccharide. In concert with LBP, binds to monomeric lipopolysaccharide and delivers it to the LY96/TLR4 complex, thereby mediating the innate immune response to bacterial lipopolysaccharide (LPS). Acts via MyD88, TIRAP and TRAF6, leading to NF-kappa-B activation, cytokine secretion and the inflammatory response. Acts as a coreceptor for TLR2:TLR6 heterodimer in response to diacylated lipopeptides and for TLR2:TLR1 heterodimer in response to triacylated lipopeptides, these clusters trigger signaling from the cell surface and subsequently are targeted to the Golgi in a lipid-raft dependent pathway. Binds electronegative LDL (LDL(-)) and mediates the cytokine release induced by LDL(-). This Oryctolagus cuniculus (Rabbit) protein is Monocyte differentiation antigen CD14 (CD14).